The primary structure comprises 145 residues: Histone H2B.7 (145 aa).

Over residues 1–30 (MAPKAEKKPAEKKPVEEKSKAEKAPAEKKP) the composition is skewed to basic and acidic residues. The disordered stretch occupies residues 1-53 (MAPKAEKKPAEKKPVEEKSKAEKAPAEKKPKAGKKLPKEAGAGGDKKKKMKKK). A N,N,N-trimethylalanine; alternate modification is found at alanine 2. Position 2 is a n,N-dimethylalanine; alternate (alanine 2). Residue alanine 2 is modified to N-methylalanine; alternate. N6-methyllysine; partial is present on lysine 4. N6-acetyllysine is present on residues lysine 7 and lysine 12. Residue lysine 13 is modified to N6,N6-dimethyllysine. N6-acetyllysine occurs at positions 23, 28, and 34. Position 35 is an N6-acetyllysine; partial (lysine 35). Lysine 141 is covalently cross-linked (Glycyl lysine isopeptide (Lys-Gly) (interchain with G-Cter in ubiquitin)).

The protein belongs to the histone H2B family. The nucleosome is a histone octamer containing two molecules each of H2A, H2B, H3 and H4 assembled in one H3-H4 heterotetramer and two H2A-H2B heterodimers. The octamer wraps approximately 147 bp of DNA. Post-translationally, can be acetylated to form H2BK6ac, H2BK11ac, H2BK22ac, H2BK27ac H2BK33ac and H2BK34ac. Mono-, di- or trimethylated at the N-terminus to form H2BA1me1/2/3. H2BA1me2 and H2BA1me3 may be methylated and/or acetylated to form H2BA1me2K3me1, H2BA1me2K3me1K6ac, H2BA1me2K6ac H2BA1me3K6ac, H2BA1me3K6acK11ac and H2BA1me2K3me1K6acK11ac. In terms of processing, monoubiquitinated by BRE1 to form H2BK143ub1 and deubiquitinated by UBP26. Required for heterochromatic histone H3 di- and trimethylation at H3K4me. May give a specific tag for epigenetic transcriptional activation.

The protein localises to the nucleus. It localises to the chromosome. Core component of nucleosome. Nucleosomes wrap and compact DNA into chromatin, limiting DNA accessibility to the cellular machineries which require DNA as a template. Histones thereby play a central role in transcription regulation, DNA repair, DNA replication and chromosomal stability. DNA accessibility is regulated via a complex set of post-translational modifications of histones, also called histone code, and nucleosome remodeling. The chain is Histone H2B.7 from Arabidopsis thaliana (Mouse-ear cress).